Here is a 467-residue protein sequence, read N- to C-terminus: 3-isopropylmalate dehydratase large subunit (467 aa).

3 residues coordinate [4Fe-4S] cluster: Cys347, Cys407, and Cys410.

This sequence belongs to the aconitase/IPM isomerase family. LeuC type 1 subfamily. As to quaternary structure, heterodimer of LeuC and LeuD. [4Fe-4S] cluster is required as a cofactor.

The enzyme catalyses (2R,3S)-3-isopropylmalate = (2S)-2-isopropylmalate. The protein operates within amino-acid biosynthesis; L-leucine biosynthesis; L-leucine from 3-methyl-2-oxobutanoate: step 2/4. In terms of biological role, catalyzes the isomerization between 2-isopropylmalate and 3-isopropylmalate, via the formation of 2-isopropylmaleate. The chain is 3-isopropylmalate dehydratase large subunit from Trichormus variabilis (strain ATCC 29413 / PCC 7937) (Anabaena variabilis).